The primary structure comprises 204 residues: TPR repeat-containing protein RHE_CH03534.1 (204 aa).

The first 29 residues, 1–29, serve as a signal peptide directing secretion; it reads MSAMRLFALTSAMLPLAFILSTSPFPATA. TPR repeat units lie at residues 84–117, 118–151, and 153–185; these read INLLMQWADKAIEEKRNPAALDFLDEAIALKPDY, AESWNRRATLNFVMGNYRKSMSDIEHVLNIEPRH, and GALSGMAAILSNSGNDQLTLKAWERFLDIYPAD.

This Rhizobium etli (strain ATCC 51251 / DSM 11541 / JCM 21823 / NBRC 15573 / CFN 42) protein is TPR repeat-containing protein RHE_CH03534.1.